Here is a 91-residue protein sequence, read N- to C-terminus: uncharacterized protein (91 aa).

An N-terminal signal peptide occupies residues 1–18 (MKVNLILFSLFLLVSIMA). Cysteine 19 carries the N-palmitoyl cysteine lipid modification. Cysteine 19 carries S-diacylglycerol cysteine lipidation.

It is found in the cell membrane. This is an uncharacterized protein from Escherichia coli (strain K12).